A 79-amino-acid chain; its full sequence is Neurotoxin 3FTx-LI (79 aa).

A signal peptide spans 1–21 (MKTLLLTLVVVTIVCLDLGYT). 4 cysteine pairs are disulfide-bonded: C24–C43, C36–C61, C65–C71, and C72–C77.

In terms of tissue distribution, expressed by the venom gland.

It is found in the secreted. Blocks both the muscle-twitch response to nerve stimulation and the response to exogenous acetylcholine. The protein is Neurotoxin 3FTx-LI of Bungarus fasciatus (Banded krait).